The sequence spans 146 residues: Ribosome maturation factor RimP (146 aa).

Belongs to the RimP family.

It localises to the cytoplasm. Its function is as follows. Required for maturation of 30S ribosomal subunits. The protein is Ribosome maturation factor RimP of Dechloromonas aromatica (strain RCB).